A 99-amino-acid polypeptide reads, in one-letter code: Small ribosomal subunit protein bS20 (99 aa).

It belongs to the bacterial ribosomal protein bS20 family.

Binds directly to 16S ribosomal RNA. This chain is Small ribosomal subunit protein bS20, found in Synechococcus sp. (strain CC9311).